Consider the following 294-residue polypeptide: tRNA pseudouridine synthase B (294 aa).

Catalysis depends on Asp39, which acts as the Nucleophile.

Belongs to the pseudouridine synthase TruB family. Type 1 subfamily.

It carries out the reaction uridine(55) in tRNA = pseudouridine(55) in tRNA. Responsible for synthesis of pseudouridine from uracil-55 in the psi GC loop of transfer RNAs. The protein is tRNA pseudouridine synthase B of Streptococcus pyogenes serotype M2 (strain MGAS10270).